A 240-amino-acid polypeptide reads, in one-letter code: 1-(5-phosphoribosyl)-5-[(5-phosphoribosylamino)methylideneamino] imidazole-4-carboxamide isomerase (240 aa).

D8 serves as the catalytic Proton acceptor. D130 (proton donor) is an active-site residue.

It belongs to the HisA/HisF family.

The protein localises to the cytoplasm. It carries out the reaction 1-(5-phospho-beta-D-ribosyl)-5-[(5-phospho-beta-D-ribosylamino)methylideneamino]imidazole-4-carboxamide = 5-[(5-phospho-1-deoxy-D-ribulos-1-ylimino)methylamino]-1-(5-phospho-beta-D-ribosyl)imidazole-4-carboxamide. It participates in amino-acid biosynthesis; L-histidine biosynthesis; L-histidine from 5-phospho-alpha-D-ribose 1-diphosphate: step 4/9. This Elusimicrobium minutum (strain Pei191) protein is 1-(5-phosphoribosyl)-5-[(5-phosphoribosylamino)methylideneamino] imidazole-4-carboxamide isomerase.